Reading from the N-terminus, the 198-residue chain is MAEKENTKRNRREEILQALAQMLESSDGSQRITTAKLAANVGVSEAALYRHFPSKTRMFDSLIEFIEDSLMSRINLILQDEKETFNRLRLILLLVLGFAERNPGLTRIMTGHALMFEQDRLQGRINQLFERIEVQLRQVLREKKLRDGQGFIHDEALLATQLLAFCEGMLSRFVRSEFRYRPTQEFDARWPLIVAQLQ.

The HTH tetR-type domain occupies 9-70; sequence RNRREEILQA…SLIEFIEDSL (62 aa). The H-T-H motif DNA-binding region spans 33–52; sequence TTAKLAANVGVSEAALYRHF. Positions 119–144 form a coiled coil; the sequence is DRLQGRINQLFERIEVQLRQVLREKK.

This sequence belongs to the nucleoid occlusion factor SlmA family. In terms of assembly, homodimer. Interacts with FtsZ.

Its subcellular location is the cytoplasm. It localises to the nucleoid. In terms of biological role, required for nucleoid occlusion (NO) phenomenon, which prevents Z-ring formation and cell division over the nucleoid. Acts as a DNA-associated cell division inhibitor that binds simultaneously chromosomal DNA and FtsZ, and disrupts the assembly of FtsZ polymers. SlmA-DNA-binding sequences (SBS) are dispersed on non-Ter regions of the chromosome, preventing FtsZ polymerization at these regions. The protein is Nucleoid occlusion factor SlmA of Yersinia enterocolitica serotype O:8 / biotype 1B (strain NCTC 13174 / 8081).